A 689-amino-acid chain; its full sequence is MNFENLLIELGTEELPPKSLRKLAESFLANFTEELSKADLAFSSAVWYAAPRRLAINVTELALAQADKVVEKRGPAVSSAFDAEGKPTKAAEGWARGNGITVEQAERLVTDKGEWLVHNAKVEGVETKSLIAAMAQRALDKLPIPKPMRWGNNKTQFIRPVHTATMLLGSELIEGELLGIKSARTVRGHRFMGLKQFELAHADHYLADLKEKGKVIADYESRKALIKADAEKAAAKIGGTADIEDSLLEEVASLVEWPVVLTASFEEKFLAVPSEALVYTMKGDQKYFPVFDDAGKLLPNFIFVTNIESKDPAQIISGNEKVVRPRLADAEFFFNTDKKHTLESRLPSLETVLFQQQLGTLKDKVNRISALAAFIAEQTGANAVDAARAGLLSKTDLMTNMVMEFTDTQGTMGMHYARLDGETEAVAVAMEEQYKPKFSGDTVPSAGVSCAVALADKLDTLVGIFGIGQAPKGAADPFALRRAAIGVLRIIVENKLPLDLVDLIAKAQALHGTNLSNANASDEVLEFLMARFRAWYQDKGIGVDVILAVLARRPTRPADFDSRINAVSHFRSLEASSALAAANKRVSNILAKVEGALPTTINASLLTEAAEQALAAKLNELQPLLAPLFANADYQQALTLLAGLRESVDQFFEDVMVMADDEALKNNRLALLNNLREQFLHVADISLLQ.

Belongs to the class-II aminoacyl-tRNA synthetase family. Tetramer of two alpha and two beta subunits.

It is found in the cytoplasm. It carries out the reaction tRNA(Gly) + glycine + ATP = glycyl-tRNA(Gly) + AMP + diphosphate. The sequence is that of Glycine--tRNA ligase beta subunit from Shewanella baltica (strain OS223).